Consider the following 179-residue polypeptide: Large ribosomal subunit protein uL5 (179 aa).

It belongs to the universal ribosomal protein uL5 family. As to quaternary structure, part of the 50S ribosomal subunit; part of the 5S rRNA/L5/L18/L25 subcomplex. Contacts the 5S rRNA and the P site tRNA. Forms a bridge to the 30S subunit in the 70S ribosome.

In terms of biological role, this is one of the proteins that bind and probably mediate the attachment of the 5S RNA into the large ribosomal subunit, where it forms part of the central protuberance. In the 70S ribosome it contacts protein S13 of the 30S subunit (bridge B1b), connecting the 2 subunits; this bridge is implicated in subunit movement. Contacts the P site tRNA; the 5S rRNA and some of its associated proteins might help stabilize positioning of ribosome-bound tRNAs. The chain is Large ribosomal subunit protein uL5 from Aromatoleum aromaticum (strain DSM 19018 / LMG 30748 / EbN1) (Azoarcus sp. (strain EbN1)).